The sequence spans 450 residues: GTPase Der (450 aa).

EngA-type G domains are found at residues 3 to 170 (PTIA…LATG) and 183 to 356 (LKIA…AECS). Residues 9–16 (GRPNVGKS), 56–60 (DTGGL), 122–125 (NKVD), 189–196 (GRPNAGKS), 236–240 (DTAGV), and 301–304 (NKID) each bind GTP. Residues 357–441 (LRISTGQLNR…PLNIVFRSTF (85 aa)) enclose the KH-like domain.

Belongs to the TRAFAC class TrmE-Era-EngA-EngB-Septin-like GTPase superfamily. EngA (Der) GTPase family. Associates with the 50S ribosomal subunit.

In terms of biological role, GTPase that plays an essential role in the late steps of ribosome biogenesis. This Maridesulfovibrio salexigens (strain ATCC 14822 / DSM 2638 / NCIMB 8403 / VKM B-1763) (Desulfovibrio salexigens) protein is GTPase Der.